A 431-amino-acid chain; its full sequence is Glutamate-1-semialdehyde 2,1-aminomutase (431 aa).

N6-(pyridoxal phosphate)lysine is present on K265.

It belongs to the class-III pyridoxal-phosphate-dependent aminotransferase family. HemL subfamily. As to quaternary structure, homodimer. It depends on pyridoxal 5'-phosphate as a cofactor.

The protein resides in the cytoplasm. It catalyses the reaction (S)-4-amino-5-oxopentanoate = 5-aminolevulinate. It functions in the pathway porphyrin-containing compound metabolism; protoporphyrin-IX biosynthesis; 5-aminolevulinate from L-glutamyl-tRNA(Glu): step 2/2. The protein is Glutamate-1-semialdehyde 2,1-aminomutase of Vibrio vulnificus (strain CMCP6).